Here is a 336-residue protein sequence, read N- to C-terminus: Flavonoid 4'-O-methyltransferase 3 (336 aa).

The S-adenosyl-L-methionine site is built by Y140 and D203. The active-site Proton acceptor is the H241.

It belongs to the class I-like SAM-binding methyltransferase superfamily. Cation-independent O-methyltransferase family. As to quaternary structure, homodimer. As to expression, expressed in leaves.

It carries out the reaction scutellarein 7-methyl ether + S-adenosyl-L-methionine = ladanein + S-adenosyl-L-homocysteine + H(+). The catalysed reaction is cirsimaritin + S-adenosyl-L-methionine = salvigenin + S-adenosyl-L-homocysteine + H(+). The enzyme catalyses cirsiliol + S-adenosyl-L-methionine = eupatorin + S-adenosyl-L-homocysteine + H(+). It catalyses the reaction genkwanin + S-adenosyl-L-methionine = apigenin 4',7-dimethyl ether + S-adenosyl-L-homocysteine. Its pathway is flavonoid metabolism. Its activity is regulated as follows. Substrate inhibition by genkwanin (GENK) at concentrations above 2.5 mM. Functionally, flavonoid 4'-O-methyltransferase involved in the biosynthesis of polymethoxylated flavonoids natural products such as nevadensin and salvigenin, aroma compounds which contribute to the flavor of sweet basil, and exhibit pharmacological activities such as anti-allergic, anti-oxidant, antibacterial, anti-proliferative, and anti-inflammatory effects. Catalyzes S-adenosylmethionine-dependent regioselective 4'-O-methylation of flavonoids; active on various hydroxylated flavonoid substrates, including scutellarein-7-methyl ether (SCU7Me) and cirsimaritin (CIRM), and, with a lower efficiency, hispidulin, ladanein (LAD), cirsioliol (CIRL) and genkwanin (GENK). In Ocimum basilicum (Sweet basil), this protein is Flavonoid 4'-O-methyltransferase 3.